The sequence spans 80 residues: Large ribosomal subunit protein bL31B (80 aa).

This sequence belongs to the bacterial ribosomal protein bL31 family. Type B subfamily. In terms of assembly, part of the 50S ribosomal subunit.

This chain is Large ribosomal subunit protein bL31B, found in Streptococcus pneumoniae serotype 2 (strain D39 / NCTC 7466).